We begin with the raw amino-acid sequence, 259 residues long: MQAWQQQLNLFFIAMGFFTRIPMPKWIEVDADKLNKASRYFGLVGLLVGAISALVYTLMLYWVSPSIAIVLAMITSVLVTGGFHEDGLADTADGLGGGWTVEAKLNIMKDSRLGSYGALALVLALLLKWQLLTELALFDPSSVSLALIVGHCLSRVVAASFIFSEPYVSDSDTSKSKPLAQEQGINELSILLATGILALLLVGVMQALVLTLALTIVRYGFVRLFTKQIGGYTGDTLGAAQQGSELTCYLLLLVLGVSW.

The next 6 helical transmembrane spans lie at 9-29, 43-63, 64-84, 118-138, 143-163, and 190-210; these read NLFF…WIEV, LVGL…LYWV, SPSI…GGFH, ALAL…LALF, VSLA…SFIF, and ILLA…ALVL.

The protein belongs to the CobS family. The cofactor is Mg(2+).

The protein resides in the cell inner membrane. It carries out the reaction alpha-ribazole + adenosylcob(III)inamide-GDP = adenosylcob(III)alamin + GMP + H(+). The enzyme catalyses alpha-ribazole 5'-phosphate + adenosylcob(III)inamide-GDP = adenosylcob(III)alamin 5'-phosphate + GMP + H(+). Its pathway is cofactor biosynthesis; adenosylcobalamin biosynthesis; adenosylcobalamin from cob(II)yrinate a,c-diamide: step 7/7. In terms of biological role, joins adenosylcobinamide-GDP and alpha-ribazole to generate adenosylcobalamin (Ado-cobalamin). Also synthesizes adenosylcobalamin 5'-phosphate from adenosylcobinamide-GDP and alpha-ribazole 5'-phosphate. This Shewanella pealeana (strain ATCC 700345 / ANG-SQ1) protein is Adenosylcobinamide-GDP ribazoletransferase.